The sequence spans 261 residues: Type III pantothenate kinase (261 aa).

6-13 (DVGNTNTV) serves as a coordination point for ATP. Residue 107-110 (GADR) coordinates substrate. The active-site Proton acceptor is the D109. D129 serves as a coordination point for K(+). T132 contacts ATP. T183 contributes to the substrate binding site.

Belongs to the type III pantothenate kinase family. Homodimer. NH4(+) is required as a cofactor. K(+) serves as cofactor.

It localises to the cytoplasm. It carries out the reaction (R)-pantothenate + ATP = (R)-4'-phosphopantothenate + ADP + H(+). Its pathway is cofactor biosynthesis; coenzyme A biosynthesis; CoA from (R)-pantothenate: step 1/5. Functionally, catalyzes the phosphorylation of pantothenate (Pan), the first step in CoA biosynthesis. This chain is Type III pantothenate kinase, found in Kosmotoga olearia (strain ATCC BAA-1733 / DSM 21960 / TBF 19.5.1).